The chain runs to 585 residues: Glutamate decarboxylase (585 aa).

Over residues 35 to 56 the composition is skewed to polar residues; sequence KSAVQSGHQGSNNMRDTSSQGM. Positions 35 to 60 are disordered; it reads KSAVQSGHQGSNNMRDTSSQGMANKY. Lysine 318 is modified (N6-(pyridoxal phosphate)lysine).

It belongs to the group II decarboxylase family. Pyridoxal 5'-phosphate serves as cofactor.

It catalyses the reaction L-glutamate + H(+) = 4-aminobutanoate + CO2. This Saccharomyces cerevisiae (strain ATCC 204508 / S288c) (Baker's yeast) protein is Glutamate decarboxylase (GAD1).